The chain runs to 1298 residues: Activating molecule in BECN1-regulated autophagy protein 1 (1298 aa).

Residues 1 to 22 (MKVVPEKNAVRILWGRERGARA) form an interaction with DDB1 region. Lys45 is covalently cross-linked (Glycyl lysine isopeptide (Lys-Gly) (interchain with G-Cter in ubiquitin)). WD repeat units lie at residues 51–90 (DSPR…CVHS), 93–133 (GHRR…ESWF), and 135–175 (DSNN…AVVK). At Ser52 the chain carries Phosphoserine; by MTOR. The span at 254–266 (IQVGEQSTVQDSA) shows a compositional bias: polar residues. The segment at 254-284 (IQVGEQSTVQDSATPSPPPPPPQPSTERPRT) is disordered. The segment covering 268–277 (PSPPPPPPQP) has biased composition (pro residues). The PxP motif 1 signature appears at 275 to 281 (PQPSTER). Phosphoserine is present on Ser328. The disordered stretch occupies residues 343 to 413 (FVQTEPFHPP…SRYHREIAPG (71 aa)). The segment covering 354–385 (QASSTQQDQGLLNRPSAFSTVQSSTAGNTLRN) has biased composition (polar residues). A phosphoserine mark is found at Ser394 and Ser443. 3 stretches are compositionally biased toward polar residues: residues 458-467 (SQASVYTSAT), 547-561 (HQPT…SNLS), and 590-601 (NYSSGEASSSWQ). Disordered stretches follow at residues 458-494 (SQAS…NSGS), 538-561 (IESE…SNLS), 590-690 (NYSS…DSLR), and 747-796 (RYQQ…NARM). 2 stretches are compositionally biased toward low complexity: residues 602 to 614 (VPSS…SSGS) and 628 to 639 (SSSRLELSSSAS). Phosphoserine occurs at positions 635 and 639. Residues 661 to 674 (YTQSSRSGTVSQEA) are compositionally biased toward polar residues. The residue at position 747 (Arg747) is an Asymmetric dimethylarginine. A compositionally biased stretch (acidic residues) spans 772-781 (TDLEFEDFED). Phosphoserine; by IKKA is present on Ser1043. Residues 1043 to 1052 (SGVEYYWDQL) carry the LIR motif. Over residues 1060–1075 (HSNSRSSERPGTSRAT) the composition is skewed to polar residues. The tract at residues 1060–1079 (HSNSRSSERPGTSRATWRTD) is disordered. 2 short sequence motifs (TQT motif) span residues 1104 to 1106 (TQT) and 1116 to 1118 (TQT). Disordered regions lie at residues 1112-1143 (QNAE…YGAS), 1190-1214 (RSSQ…SRGL), and 1227-1298 (SPRT…PRNR). Polar residues predominate over residues 1191-1212 (SSQTGTEPGAAHTSSPQPSTSR). Phosphoserine is present on Ser1205. The PxP motif 2 signature appears at 1206-1212 (PQPSTSR).

It belongs to the WD repeat AMBRA1 family. As to quaternary structure, component of the DCX(AMBRA1) E3 ubiquitin ligase complex, also named CRL4(AMBRA1), at least composed of CUL4 (CUL4A or CUL4B), DDB1, AMBRA1 and RBX1. Interacts with BECN1. Probably forms a complex with BECN1 and PIK3C3. Interacts with BECN2. Interacts with BCL2; leading to prevent interaction with BCN1 and autophagy, interaction is disrupted upon autophagy induction. Interacts with ULK1. Interacts (via PxP motifs) with PPP2CA; enhancing interaction between PPP2CA and MYC or FOXO3. Forms a complex with PPP2CA and BECN1; AMBRA1 and BECN1 components of the complex regulate MYC stability via different pathways. Interacts (TQT motifs) with DYNLL1 and DYNLL2; tethering AMBRA1 and the BECN1-PIK3C3 complex in absence of autophagy. Interacts with TRAF6; interaction is required to mediate 'Lys-63'-linked ubiquitination of ULK1. Interacts with TRIM32; promoting activation of ULK1 by TRIM32 via unanchored 'Lys-63'-linked polyubiquitin chains. Interacts with PRKN. Interacts (via LIR motif) with LC3 (MAP1LC3A, MAP1LC3B or MAP1LC3C). Interacts with HUWE1. Interacts with PTK2/FAK. Interacts with SRC; required for SRC trafficking to autophagosomes. In terms of processing, phosphorylation at Ser-52 by MTOR inhibits its ability to regulate autophagy and mediate ubiquitination of ULK1. Phosphorylation by ULK1 in response to autophagy induction abolishes interaction with DYNLL1 and DYNLL2, releasing AMBRA1 from the cytoskeletal docking site to induce autophagosome nucleation. Phosphorylation by MTOR inhibits interaction with PPP2CA and subsequent dephosphorylation of MYC. Phosphorylation at Ser-1043 by CHUK/IKKA promotes its interaction with ATG8 family proteins GABARAP and MAP1LC3B and its mitophagic activity. Post-translationally, ubiquitinated by RNF2 via 'Lys-48'-linkage in unstressed cells, leading to its degradation by the proteasome. Induction of autophagy promotes stabilization via interaction with CUL4 (CUL4A or CUL4B) and DDB1. Upon prolonged starvation, ubiquitinated and degraded, terminating the autophagy response. Undergoes proteolytic processing by caspase-6 (CASP6), caspase-7 (CASP7) and caspase-8 (CASP8) during apoptosis, resulting in the dismantling of the autophagic machinery and the accomplishment of the programmed cell death program. Also cleaved by calpains during apoptosis, which mediate a complete proteolytic degradation.

It is found in the endoplasmic reticulum. The protein resides in the cytoplasm. Its subcellular location is the cytoskeleton. The protein localises to the cytoplasmic vesicle. It localises to the autophagosome. It is found in the mitochondrion. The protein resides in the cytosol. Its subcellular location is the nucleus. The protein localises to the cell junction. It localises to the focal adhesion. Its pathway is protein modification; protein ubiquitination. In terms of biological role, substrate-recognition component of a DCX (DDB1-CUL4-X-box) E3 ubiquitin-protein ligase complex involved in cell cycle control and autophagy. The DCX(AMBRA1) complex specifically mediates the polyubiquitination of target proteins such as BECN1, CCND1, CCND2, CCND3, ELOC and ULK1. Acts as an upstream master regulator of the transition from G1 to S cell phase: AMBRA1 specifically recognizes and binds phosphorylated cyclin-D (CCND1, CCND2 and CCND3), leading to cyclin-D ubiquitination by the DCX(AMBRA1) complex and subsequent degradation. By controlling the transition from G1 to S phase and cyclin-D degradation, AMBRA1 acts as a tumor suppressor that promotes genomic integrity during DNA replication and counteracts developmental abnormalities and tumor growth. AMBRA1 also regulates the cell cycle by promoting MYC dephosphorylation and degradation independently of the DCX(AMBRA1) complex: acts via interaction with the catalytic subunit of protein phosphatase 2A (PPP2CA), which enhances interaction between PPP2CA and MYC, leading to MYC dephosphorylation and degradation. Acts as a regulator of Cul5-RING (CRL5) E3 ubiquitin-protein ligase complexes by mediating ubiquitination and degradation of Elongin-C (ELOC) component of CRL5 complexes. Acts as a key regulator of autophagy by modulating the BECN1-PIK3C3 complex: controls protein turnover during neuronal development, and regulates normal cell survival and proliferation. In normal conditions, AMBRA1 is tethered to the cytoskeleton via interaction with dyneins DYNLL1 and DYNLL2. Upon autophagy induction, AMBRA1 is released from the cytoskeletal docking site to induce autophagosome nucleation by mediating ubiquitination of proteins involved in autophagy. The DCX(AMBRA1) complex mediates 'Lys-63'-linked ubiquitination of BECN1, increasing the association between BECN1 and PIK3C3 to promote PIK3C3 activity. In collaboration with TRAF6, AMBRA1 mediates 'Lys-63'-linked ubiquitination of ULK1 following autophagy induction, promoting ULK1 stability and kinase activity. Also activates ULK1 via interaction with TRIM32: TRIM32 stimulates ULK1 through unanchored 'Lys-63'-linked polyubiquitin chains. Also acts as an activator of mitophagy via interaction with PRKN and LC3 proteins (MAP1LC3A, MAP1LC3B or MAP1LC3C); possibly by bringing damaged mitochondria onto autophagosomes. Also activates mitophagy by acting as a cofactor for HUWE1; acts by promoting HUWE1-mediated ubiquitination of MFN2. AMBRA1 is also involved in regulatory T-cells (Treg) differentiation by promoting FOXO3 dephosphorylation independently of the DCX(AMBRA1) complex: acts via interaction with PPP2CA, which enhances interaction between PPP2CA and FOXO3, leading to FOXO3 dephosphorylation and stabilization. May act as a regulator of intracellular trafficking, regulating the localization of active PTK2/FAK and SRC. Also involved in transcription regulation by acting as a scaffold for protein complexes at chromatin. This chain is Activating molecule in BECN1-regulated autophagy protein 1, found in Homo sapiens (Human).